The sequence spans 94 residues: MPKLAVVLLVLLILPLSYFDAAGGQAVQGDRRGNGLARYLQRGDREVQECQVDTPGSSWGKCCMTRMCGTMCCSRSVCTCVYHWRRGHGCSCPG.

The first 24 residues, 1–24 (MPKLAVVLLVLLILPLSYFDAAGG), serve as a signal peptide directing secretion. A propeptide spanning residues 25-45 (QAVQGDRRGNGLARYLQRGDR) is cleaved from the precursor. A 4-carboxyglutamate; partial modification is found at glutamate 46. At glutamate 49 the chain carries 4-carboxyglutamate. A 4-hydroxyproline modification is found at proline 55. Cystine bridges form between cysteine 63-cysteine 72, cysteine 68-cysteine 80, cysteine 73-cysteine 90, and cysteine 78-cysteine 92.

Belongs to the conotoxin D superfamily. In terms of assembly, hetero-, homo- or pseudo-homodimer (identical sequence, different post-translational modifications). In terms of tissue distribution, expressed by the venom duct.

The protein resides in the secreted. Functionally, alpha-D-conopeptides act on postsynaptic membranes, they bind to the nicotinic acetylcholine receptors (nAChR) and thus inhibit them. Through its two C-terminal domains, this homodimeric protein would bind to two nAChR allosteric sites, located outside the nAChR C-loop of the principal binding face and at the adjacent binding interface in a clockwise direction. This toxin specifically blocks mammalian neuronal nAChR of the alpha-7/CHRNA7 (IC(50)=0.25 nM), alpha-3-beta-2/CHRNA3-CHRNB2 (IC(50)=2.8 nM), and alpha-4-beta-2/CHRNA4-CHRNB2 (IC(50)=28.6 nM) subtypes. Has no effect on alpha-3-beta-4/CHRNA3-CHRNB4, alpha-4-beta-4/CHRNA4-CHRNB4 and alpha-1-beta-1-epsilon-delta/CHRNA1-CHRNB1-CHRNE-CHRND subtypes of nAChRs. In Conus capitaneus (Captain cone), this protein is Alpha-conotoxin Cp20.3.